Reading from the N-terminus, the 627-residue chain is WPP domain-interacting tail-anchored protein 2 (627 aa).

3 coiled-coil regions span residues 81-152 (CGIL…RRTL), 188-218 (LEKSLSRELELEKKLMEFQQNEEQLKLKLHY), and 312-542 (TLRE…KILR). Residues 577–597 (SLQEDERTREEPEKQSVSEKS) form a disordered region. Over residues 580–597 (EDERTREEPEKQSVSEKS) the composition is skewed to basic and acidic residues. The helical transmembrane segment at 606-626 (LKHILVVALVFVLFCSFFGVT) threads the bilayer.

As to quaternary structure, component of Ran complexes at least composed of WIT1 or WIT2, RANGAP1 or RANGAP2, and WIP1 or WIP2 or WIP3. Interacts with KAKU1. Core component of the LINC complex which is composed of inner nuclear membrane SUN domain-containing proteins coupled to outer nuclear membrane WIP and WIT proteins. The LINC complex also involves nucleoskeletal proteins CRWN/LINC and possibly KAKU4 and the cytoskeletal myosin KAKU1. Interacts with WIP1, WIP2 and WIP3. In terms of tissue distribution, ubiquitous.

Its subcellular location is the membrane. Functionally, together with WIT1, required for the nuclear envelope docking of RANGAP proteins in root tips. Plays a role in nuclear shape determination. As component of the SUN-WIP-WIT2-KAKU1 complex, mediates the transfer of cytoplasmic forces to the nuclear envelope (NE), leading to nuclear shape changes. The sequence is that of WPP domain-interacting tail-anchored protein 2 (WIT2) from Arabidopsis thaliana (Mouse-ear cress).